The following is a 286-amino-acid chain: MIIDRLFDSVEKKGHVCLGLDTDITYVPEEFCKKFNSIEDAIFNFNKKIIDATLDVVSCYKVQIAYYEAYGLKGLLAYKRTLEYLREKKAIAIADIKRGDIAKTAEMYAKAHFEGDFEADFVTLNPYMGLDGIEPYMPYIEKMEKGLFILLRTSNKGAYDIQYIKTQGGKNVYDEVGEKIYDLGQKATGRSKYSSIGAVVGCTHVEEGVEIRNKFKNMFFLIPGYGAQGGTAKEVSLYLREGNGGVVNSSRGILLAYKKEENGEKIFDECARLAAINMRDEIRKTL.

K97 functions as the Proton donor in the catalytic mechanism.

The protein belongs to the OMP decarboxylase family. Type 2 subfamily.

It carries out the reaction orotidine 5'-phosphate + H(+) = UMP + CO2. It functions in the pathway pyrimidine metabolism; UMP biosynthesis via de novo pathway; UMP from orotate: step 2/2. This Clostridium acetobutylicum (strain ATCC 824 / DSM 792 / JCM 1419 / IAM 19013 / LMG 5710 / NBRC 13948 / NRRL B-527 / VKM B-1787 / 2291 / W) protein is Orotidine 5'-phosphate decarboxylase (pyrF).